A 271-amino-acid polypeptide reads, in one-letter code: Acyl-[acyl-carrier-protein]--UDP-N-acetylglucosamine O-acyltransferase (271 aa).

The protein belongs to the transferase hexapeptide repeat family. LpxA subfamily. Homotrimer.

Its subcellular location is the cytoplasm. The catalysed reaction is a (3R)-hydroxyacyl-[ACP] + UDP-N-acetyl-alpha-D-glucosamine = a UDP-3-O-[(3R)-3-hydroxyacyl]-N-acetyl-alpha-D-glucosamine + holo-[ACP]. It functions in the pathway glycolipid biosynthesis; lipid IV(A) biosynthesis; lipid IV(A) from (3R)-3-hydroxytetradecanoyl-[acyl-carrier-protein] and UDP-N-acetyl-alpha-D-glucosamine: step 1/6. Involved in the biosynthesis of lipid A, a phosphorylated glycolipid that anchors the lipopolysaccharide to the outer membrane of the cell. This chain is Acyl-[acyl-carrier-protein]--UDP-N-acetylglucosamine O-acyltransferase, found in Agrobacterium fabrum (strain C58 / ATCC 33970) (Agrobacterium tumefaciens (strain C58)).